Consider the following 397-residue polypeptide: LL-diaminopimelate aminotransferase (397 aa).

2 residues coordinate substrate: Y14 and G41. Pyridoxal 5'-phosphate-binding positions include Y71, 104–105 (AK), Y128, N174, Y205, and 233–235 (SFS). K105, Y128, and N174 together coordinate substrate. K236 is subject to N6-(pyridoxal phosphate)lysine. Pyridoxal 5'-phosphate contacts are provided by R244 and N275. Positions 275 and 368 each coordinate substrate.

It belongs to the class-I pyridoxal-phosphate-dependent aminotransferase family. LL-diaminopimelate aminotransferase subfamily. In terms of assembly, homodimer. Pyridoxal 5'-phosphate is required as a cofactor.

It carries out the reaction (2S,6S)-2,6-diaminopimelate + 2-oxoglutarate = (S)-2,3,4,5-tetrahydrodipicolinate + L-glutamate + H2O + H(+). It participates in amino-acid biosynthesis; L-lysine biosynthesis via DAP pathway; LL-2,6-diaminopimelate from (S)-tetrahydrodipicolinate (aminotransferase route): step 1/1. Involved in the synthesis of meso-diaminopimelate (m-DAP or DL-DAP), required for both lysine and peptidoglycan biosynthesis. Catalyzes the direct conversion of tetrahydrodipicolinate to LL-diaminopimelate. The chain is LL-diaminopimelate aminotransferase from Chlamydia pneumoniae (Chlamydophila pneumoniae).